Here is a 197-residue protein sequence, read N- to C-terminus: Peptide deformylase (197 aa).

Cys106 and His148 together coordinate Fe cation. Glu149 is an active-site residue. His152 provides a ligand contact to Fe cation.

This sequence belongs to the polypeptide deformylase family. The cofactor is Fe(2+).

The catalysed reaction is N-terminal N-formyl-L-methionyl-[peptide] + H2O = N-terminal L-methionyl-[peptide] + formate. Its function is as follows. Removes the formyl group from the N-terminal Met of newly synthesized proteins. Requires at least a dipeptide for an efficient rate of reaction. N-terminal L-methionine is a prerequisite for activity but the enzyme has broad specificity at other positions. The polypeptide is Peptide deformylase (Mycolicibacterium gilvum (strain PYR-GCK) (Mycobacterium gilvum (strain PYR-GCK))).